The following is an 880-amino-acid chain: Alanine--tRNA ligase (880 aa).

Histidine 568, histidine 572, cysteine 670, and histidine 674 together coordinate Zn(2+).

It belongs to the class-II aminoacyl-tRNA synthetase family. The cofactor is Zn(2+).

Its subcellular location is the cytoplasm. It catalyses the reaction tRNA(Ala) + L-alanine + ATP = L-alanyl-tRNA(Ala) + AMP + diphosphate. Functionally, catalyzes the attachment of alanine to tRNA(Ala) in a two-step reaction: alanine is first activated by ATP to form Ala-AMP and then transferred to the acceptor end of tRNA(Ala). Also edits incorrectly charged Ser-tRNA(Ala) and Gly-tRNA(Ala) via its editing domain. The chain is Alanine--tRNA ligase from Exiguobacterium sibiricum (strain DSM 17290 / CCUG 55495 / CIP 109462 / JCM 13490 / 255-15).